The chain runs to 171 residues: PBAN-type neuropeptides (171 aa).

The N-terminal stretch at 1–22 is a signal peptide; sequence MFRLYFFFNVICIFLAIRSAIG. Residues 23-47 constitute a propeptide that is removed on maturation; that stretch reads GEVPDATEQKINNFLASGKDSEDLS. At Leu-59 the chain carries Leucine amide. A propeptide spanning residues 63-111 is cleaved from the precursor; it reads TIASELHDEMMDEIDDNPLYYSGESPQRVASEIAQGTPYVVLLLTGRVL. The interval 120 to 151 is disordered; sequence HSTTPRLGRRDASSSNENNSRPPFAPRLGRNL. Residues Leu-126, Leu-147, and Leu-157 each carry the leucine amide modification. A propeptide spanning residues 160-171 is cleaved from the precursor; the sequence is SFGAPVVDNFAY.

It belongs to the pyrokinin family.

Its subcellular location is the secreted. Functionally, a hormone that controls sex pheromone production in females and pheromone responsiveness in male. Also mediates visceral muscle contractile activity (myotropic activity). The sequence is that of PBAN-type neuropeptides from Aedes aegypti (Yellowfever mosquito).